A 372-amino-acid polypeptide reads, in one-letter code: O-methyltransferase bfoE (372 aa).

Tryptophan 186 lines the S-adenosyl-L-methionine pocket. The Proton acceptor role is filled by histidine 285.

It belongs to the class I-like SAM-binding methyltransferase superfamily. Cation-independent O-methyltransferase family.

It functions in the pathway secondary metabolite biosynthesis. In terms of biological role, cytochrome P450 monooxygenase; part of the gene cluster that mediates the biosynthesis of bifonsecin B, a dimeric gamma-naphthopyrone. The first step in the biosynthesis of bifonsecin B is the production of gamma-naphthopyrone precursor YWA1 by the non-reducing polyketide synthase albA, via condensation of one acetyl-CoA starter unit with 6 malonyl-CoA units. YWA1 is then methylated by bfoE at position C-6 to yield foncesin which is further methylated at position C-8 by bfoD to produce fonsecin B. A key enzyme in the biosynthetic pathway is the cytochrome P450 monooxygenase bfoB which catalyzes the oxidative dimerization of fonsecin B to bifonsecin B. Bfob also catalyzes the oxidative dimerization of rubrofusarin B into nigerone. The stereoselectivity of bfoB is influenced by the two natural monomeric substrates; homodimerization of fonsecin B yields a stereochemically pure biaryl, M-foncerine B, while rubrofusarin B yields a mixture of enantiomers M- and P-nigerone. The protein is O-methyltransferase bfoE of Aspergillus brasiliensis (strain CBS 101740 / IMI 381727 / IBT 21946).